The chain runs to 529 residues: Peptide chain release factor 3 (529 aa).

The region spanning 11 to 280 (AKRRTFAIIS…GLVAWAPAPM (270 aa)) is the tr-type G domain. GTP-binding positions include 20–27 (SHPDAGKT), 88–92 (DTPGH), and 142–145 (NKLD).

Belongs to the TRAFAC class translation factor GTPase superfamily. Classic translation factor GTPase family. PrfC subfamily.

It localises to the cytoplasm. Functionally, increases the formation of ribosomal termination complexes and stimulates activities of RF-1 and RF-2. It binds guanine nucleotides and has strong preference for UGA stop codons. It may interact directly with the ribosome. The stimulation of RF-1 and RF-2 is significantly reduced by GTP and GDP, but not by GMP. In Salmonella agona (strain SL483), this protein is Peptide chain release factor 3.